Here is a 179-residue protein sequence, read N- to C-terminus: Large ribosomal subunit protein bL9 (179 aa).

The interval 155-179 is disordered; that stretch reads KPEEAPVPVAEEPTAETEQAEVAAE. Residues 167–179 show a composition bias toward acidic residues; that stretch reads PTAETEQAEVAAE.

The protein belongs to the bacterial ribosomal protein bL9 family.

Binds to the 23S rRNA. This Porphyromonas gingivalis (strain ATCC BAA-308 / W83) protein is Large ribosomal subunit protein bL9.